We begin with the raw amino-acid sequence, 230 residues long: Probable nicotinate-nucleotide adenylyltransferase (230 aa).

The protein belongs to the NadD family.

The catalysed reaction is nicotinate beta-D-ribonucleotide + ATP + H(+) = deamido-NAD(+) + diphosphate. It participates in cofactor biosynthesis; NAD(+) biosynthesis; deamido-NAD(+) from nicotinate D-ribonucleotide: step 1/1. In terms of biological role, catalyzes the reversible adenylation of nicotinate mononucleotide (NaMN) to nicotinic acid adenine dinucleotide (NaAD). The protein is Probable nicotinate-nucleotide adenylyltransferase of Pseudomonas putida (strain ATCC 47054 / DSM 6125 / CFBP 8728 / NCIMB 11950 / KT2440).